The primary structure comprises 317 residues: Ventral anterior homeobox 1 (317 aa).

Residues 1–62 are disordered; it reads MEVRYSQDSE…CEKSRASSGD (62 aa). The span at 18–27 shows a compositional bias: basic and acidic residues; it reads GLKEGKEGKD. The homeobox DNA-binding region spans 92–151; sequence PKRTRTSFTAEQLYRLEMEFQRCQYVVGRERTELARQLNLSETQVKVWFQNRRTKQKKDQ. Residues 203–248 form a disordered region; sequence GPSLGITANGGSSSSSRSSAGSSGTAGGSPPLPTVTSSGTVTGLQG. Over residues 212 to 225 the composition is skewed to low complexity; sequence GGSSSSSRSSAGSS. A compositionally biased stretch (polar residues) spans 236–247; the sequence is TVTSSGTVTGLQ.

This sequence belongs to the EMX homeobox family. As to expression, expressed in the anterior neural keel and later in the preoptic area and optic stalk.

Its subcellular location is the nucleus. Its function is as follows. Transcription factor that is required for closure of the choroid fissure and together with Vax2 is required for optic nerve differentiation and to limit retinal development to the optic cup. The polypeptide is Ventral anterior homeobox 1 (vax1) (Danio rerio (Zebrafish)).